A 192-amino-acid chain; its full sequence is Peptidyl-tRNA hydrolase (192 aa).

Tyrosine 18 is a binding site for tRNA. The active-site Proton acceptor is histidine 23. Residues phenylalanine 69, asparagine 71, and asparagine 117 each coordinate tRNA.

It belongs to the PTH family. As to quaternary structure, monomer.

The protein localises to the cytoplasm. The enzyme catalyses an N-acyl-L-alpha-aminoacyl-tRNA + H2O = an N-acyl-L-amino acid + a tRNA + H(+). Its function is as follows. Hydrolyzes ribosome-free peptidyl-tRNAs (with 1 or more amino acids incorporated), which drop off the ribosome during protein synthesis, or as a result of ribosome stalling. Catalyzes the release of premature peptidyl moieties from peptidyl-tRNA molecules trapped in stalled 50S ribosomal subunits, and thus maintains levels of free tRNAs and 50S ribosomes. The polypeptide is Peptidyl-tRNA hydrolase (Neisseria meningitidis serogroup A / serotype 4A (strain DSM 15465 / Z2491)).